The chain runs to 103 residues: Large ribosomal subunit protein bL21 (103 aa).

Belongs to the bacterial ribosomal protein bL21 family. In terms of assembly, part of the 50S ribosomal subunit. Contacts protein L20.

This protein binds to 23S rRNA in the presence of protein L20. The polypeptide is Large ribosomal subunit protein bL21 (Ralstonia nicotianae (strain ATCC BAA-1114 / GMI1000) (Ralstonia solanacearum)).